The following is a 222-amino-acid chain: N-(5'-phosphoribosyl)anthranilate isomerase (222 aa).

This sequence belongs to the TrpF family.

It carries out the reaction N-(5-phospho-beta-D-ribosyl)anthranilate = 1-(2-carboxyphenylamino)-1-deoxy-D-ribulose 5-phosphate. It participates in amino-acid biosynthesis; L-tryptophan biosynthesis; L-tryptophan from chorismate: step 3/5. The polypeptide is N-(5'-phosphoribosyl)anthranilate isomerase (Gloeobacter violaceus (strain ATCC 29082 / PCC 7421)).